The chain runs to 300 residues: Bifunctional protein FolD (300 aa).

NADP(+) contacts are provided by residues 169–171 (GHS) and isoleucine 235.

Belongs to the tetrahydrofolate dehydrogenase/cyclohydrolase family. In terms of assembly, homodimer.

The enzyme catalyses (6R)-5,10-methylene-5,6,7,8-tetrahydrofolate + NADP(+) = (6R)-5,10-methenyltetrahydrofolate + NADPH. It carries out the reaction (6R)-5,10-methenyltetrahydrofolate + H2O = (6R)-10-formyltetrahydrofolate + H(+). It functions in the pathway one-carbon metabolism; tetrahydrofolate interconversion. Catalyzes the oxidation of 5,10-methylenetetrahydrofolate to 5,10-methenyltetrahydrofolate and then the hydrolysis of 5,10-methenyltetrahydrofolate to 10-formyltetrahydrofolate. The polypeptide is Bifunctional protein FolD (Rhodobacter capsulatus (strain ATCC BAA-309 / NBRC 16581 / SB1003)).